The following is a 212-amino-acid chain: Uracil phosphoribosyltransferase (212 aa).

Residues Arg-78, Arg-103, and 130 to 138 (DPMLATGSS) contribute to the 5-phospho-alpha-D-ribose 1-diphosphate site. Residues Ile-193 and 198–200 (GDA) contribute to the uracil site. 5-phospho-alpha-D-ribose 1-diphosphate is bound at residue Asp-199.

Belongs to the UPRTase family. Mg(2+) serves as cofactor.

The enzyme catalyses UMP + diphosphate = 5-phospho-alpha-D-ribose 1-diphosphate + uracil. It functions in the pathway pyrimidine metabolism; UMP biosynthesis via salvage pathway; UMP from uracil: step 1/1. With respect to regulation, allosterically activated by GTP. Functionally, catalyzes the conversion of uracil and 5-phospho-alpha-D-ribose 1-diphosphate (PRPP) to UMP and diphosphate. This chain is Uracil phosphoribosyltransferase, found in Pseudomonas fluorescens (strain ATCC BAA-477 / NRRL B-23932 / Pf-5).